Consider the following 49-residue polypeptide: Large ribosomal subunit protein bL33 (49 aa).

This sequence belongs to the bacterial ribosomal protein bL33 family.

The protein is Large ribosomal subunit protein bL33 of Clostridioides difficile (strain 630) (Peptoclostridium difficile).